Reading from the N-terminus, the 248-residue chain is 2,3-bisphosphoglycerate-dependent phosphoglycerate mutase 2 (248 aa).

Residues 8-15 (RHGESAWN), 21-22 (TG), arginine 60, 87-90 (EKHY), lysine 98, 114-115 (RR), and 183-184 (GN) each bind substrate. The active-site Tele-phosphohistidine intermediate is the histidine 9. The active-site Proton donor/acceptor is glutamate 87.

This sequence belongs to the phosphoglycerate mutase family. BPG-dependent PGAM subfamily.

The enzyme catalyses (2R)-2-phosphoglycerate = (2R)-3-phosphoglycerate. The protein operates within carbohydrate degradation; glycolysis; pyruvate from D-glyceraldehyde 3-phosphate: step 3/5. In terms of biological role, catalyzes the interconversion of 2-phosphoglycerate and 3-phosphoglycerate. This Bacteroides thetaiotaomicron (strain ATCC 29148 / DSM 2079 / JCM 5827 / CCUG 10774 / NCTC 10582 / VPI-5482 / E50) protein is 2,3-bisphosphoglycerate-dependent phosphoglycerate mutase 2.